The chain runs to 416 residues: 3-hydroxy-3-methylglutaryl coenzyme A reductase AN1593 (416 aa).

E103 acts as the Charge relay system in catalysis. N-linked (GlcNAc...) asparagine glycosylation occurs at N167. K236 serves as the catalytic Charge relay system. The N-linked (GlcNAc...) asparagine glycan is linked to N277. The active-site Charge relay system is D312. Residues 380-400 (LALLVAAGVLAGELSLCSALS) form a helical membrane-spanning segment. H408 acts as the Proton donor in catalysis.

It belongs to the HMG-CoA reductase family.

The protein resides in the membrane. It catalyses the reaction (R)-mevalonate + 2 NADP(+) + CoA = (3S)-3-hydroxy-3-methylglutaryl-CoA + 2 NADPH + 2 H(+). Its pathway is metabolic intermediate biosynthesis; (R)-mevalonate biosynthesis; (R)-mevalonate from acetyl-CoA: step 3/3. In terms of biological role, 3-hydroxy-3-methylglutaryl coenzyme A reductase; part of the gene cluster that mediates the biosynthesis of the diterpene ent-pimara-8(14),15-diene (PD). Within the cluster, the HMG-CoA reductase AN1593 functions in the mevalonate pathway, which produces isoprenoid precursors. The geranylgeranyl pyrophosphate (GGPP) synthase AN1592 is needed in the formation of GGPP, the precursor for diterpenes. Lastly, the pimaradiene synthase pbcA performs the 2 cyclization steps that convert GGPP to ent-pimara-8(14),15-diene. The putative roles of the remaining cluster enzymes in ent-pimara-8(14),15-diene biosynthesis is unclear. The cytochrome P450 monooxygenase AN1598, the glutathione S-transferase AN1595, the oxidoreductases AN1596 and AN1597 probably function as decorative enzymes. It is possible that in biological conditions the compound is oxidized to ent-pimara-8(14),15-dien-19-oic acid, which is a bioactive diterpene compound predominant in many plant extracts. The chain is 3-hydroxy-3-methylglutaryl coenzyme A reductase AN1593 from Emericella nidulans (strain FGSC A4 / ATCC 38163 / CBS 112.46 / NRRL 194 / M139) (Aspergillus nidulans).